The sequence spans 393 residues: MSDKPKTKPLPSFVEGRLDFYIQDLIEQNENQKHLVLGKRPQQGAVVMQSNDYLSLSHNLQIQQAHRDAIYEHDDNVVMSAIFLQDDDSKPAFETQLAEYVGMGSCLLSQSGWAANIGLLQTICPPETPVYIDFFAHMSLWEGIRAAGAQAHPFMHNNMNHLRKQIQRNGSGVIVVDSVYSTIGTIAPLRDIYEMAREFDCALVVDESHSLGTHGPNGSGLVKALELTEQVDFITVSLAKTFAYRAGAILGPEKLARTLPFVAFPAIFSSTVLPQEIVRLEKTLEVIRSADDKRTMLFKRAKELRTGLKQIGFHIRSESQIVALECGSERNTERVRDFLEERNVFGAVFCRPATGKNKNIIRFSINADMTSRDIDHVLTACQEAYNHPELEFA.

At Lys240 the chain carries N6-(pyridoxal phosphate)lysine.

Belongs to the class-II pyridoxal-phosphate-dependent aminotransferase family. It depends on pyridoxal 5'-phosphate as a cofactor.

Required for the synthesis of the quorum-sensing autoinducer CAI-1 ((S)-3-hydroxytridecan-4-one) which probably functions as an intragenus signal. The polypeptide is CAI-1 autoinducer synthase (cqsA) (Vibrio campbellii (strain ATCC BAA-1116)).